The chain runs to 352 residues: Alanine racemase (352 aa).

Lysine 33 acts as the Proton acceptor; specific for D-alanine in catalysis. Position 33 is an N6-(pyridoxal phosphate)lysine (lysine 33). Arginine 129 is a binding site for substrate. Tyrosine 250 functions as the Proton acceptor; specific for L-alanine in the catalytic mechanism. Methionine 298 contributes to the substrate binding site.

This sequence belongs to the alanine racemase family. Requires pyridoxal 5'-phosphate as cofactor.

It catalyses the reaction L-alanine = D-alanine. Its pathway is amino-acid biosynthesis; D-alanine biosynthesis; D-alanine from L-alanine: step 1/1. Its function is as follows. Catalyzes the interconversion of L-alanine and D-alanine. May also act on other amino acids. In Neisseria meningitidis serogroup C / serotype 2a (strain ATCC 700532 / DSM 15464 / FAM18), this protein is Alanine racemase (alr).